The sequence spans 117 residues: Large ribosomal subunit protein uL18 (117 aa).

Belongs to the universal ribosomal protein uL18 family. Part of the 50S ribosomal subunit; part of the 5S rRNA/L5/L18/L25 subcomplex. Contacts the 5S and 23S rRNAs.

Its function is as follows. This is one of the proteins that bind and probably mediate the attachment of the 5S RNA into the large ribosomal subunit, where it forms part of the central protuberance. This chain is Large ribosomal subunit protein uL18, found in Phytoplasma australiense.